Reading from the N-terminus, the 332-residue chain is NADH-quinone oxidoreductase subunit H (332 aa).

Transmembrane regions (helical) follow at residues V16–I36, Y87–F107, I116–T136, L164–V184, V190–E210, V231–A251, A253–I273, V277–F297, and V312–F332.

It belongs to the complex I subunit 1 family. NDH-1 is composed of 14 different subunits. Subunits NuoA, H, J, K, L, M, N constitute the membrane sector of the complex.

It localises to the cell membrane. It carries out the reaction a quinone + NADH + 5 H(+)(in) = a quinol + NAD(+) + 4 H(+)(out). Its function is as follows. NDH-1 shuttles electrons from NADH, via FMN and iron-sulfur (Fe-S) centers, to quinones in the respiratory chain. The immediate electron acceptor for the enzyme in this species is believed to be ubiquinone. Couples the redox reaction to proton translocation (for every two electrons transferred, four hydrogen ions are translocated across the cytoplasmic membrane), and thus conserves the redox energy in a proton gradient. This subunit may bind ubiquinone. This Geobacillus thermodenitrificans (strain NG80-2) protein is NADH-quinone oxidoreductase subunit H.